Consider the following 353-residue polypeptide: Lipase ZK262.3 (353 aa).

Positions 1-22 (MPKNLRFSVFLLFLLCINSVFG) are cleaved as a signal peptide. Asn32 and Asn64 each carry an N-linked (GlcNAc...) asparagine glycan. The active-site Nucleophile is Ser163. Asp221 functions as the Charge relay system in the catalytic mechanism. Asn267 is a glycosylation site (N-linked (GlcNAc...) asparagine). Cys277 and Cys288 form a disulfide bridge. Catalysis depends on His306, which acts as the Charge relay system.

It belongs to the AB hydrolase superfamily. Lipase family.

The protein localises to the secreted. In terms of biological role, probable lipase. The chain is Lipase ZK262.3 from Caenorhabditis elegans.